The sequence spans 551 residues: Serendipity locus protein alpha (551 aa).

The protein resides in the cytoplasm. Its subcellular location is the cell membrane. In terms of biological role, required for the cellularization of the syncytial blastoderm embryo. Involved in the localization of the actin filaments just prior to and during plasma membrane invagination. Sry-alpha together with nullo and bnk may provide auxiliary functions, by acting both to stabilize a large and dynamic microfilament structure and regulate its functions. The polypeptide is Serendipity locus protein alpha (Sry-alpha) (Drosophila pseudoobscura pseudoobscura (Fruit fly)).